Consider the following 229-residue polypeptide: Ribonuclease 3 (229 aa).

The RNase III domain occupies tryptophan 4–glycine 133. Glutamate 46 lines the Mg(2+) pocket. Aspartate 50 is a catalytic residue. 2 residues coordinate Mg(2+): aspartate 119 and glutamate 122. Glutamate 122 is a catalytic residue. Residues aspartate 159–histidine 228 enclose the DRBM domain.

It belongs to the ribonuclease III family. Homodimer. Requires Mg(2+) as cofactor.

It localises to the cytoplasm. The catalysed reaction is Endonucleolytic cleavage to 5'-phosphomonoester.. Its function is as follows. Digests double-stranded RNA. Involved in the processing of primary rRNA transcript to yield the immediate precursors to the large and small rRNAs (23S and 16S). Processes some mRNAs, and tRNAs when they are encoded in the rRNA operon. Processes pre-crRNA and tracrRNA of type II CRISPR loci if present in the organism. The sequence is that of Ribonuclease 3 from Listeria monocytogenes serotype 4a (strain HCC23).